Consider the following 813-residue polypeptide: UPF0508 protein KLLA0A06237g (813 aa).

The interval 478–537 (KKDKSKSQKNSTDSLAKLSDTKSIHPPESAMSSHASTPSSTSKSSKSSKSSSTLSPSTCK) is disordered. Low complexity predominate over residues 506-537 (SAMSSHASTPSSTSKSSKSSKSSSTLSPSTCK).

This sequence belongs to the UPF0508 family.

The protein is UPF0508 protein KLLA0A06237g of Kluyveromyces lactis (strain ATCC 8585 / CBS 2359 / DSM 70799 / NBRC 1267 / NRRL Y-1140 / WM37) (Yeast).